Consider the following 293-residue polypeptide: Epidermal growth factor-like protein 8 (293 aa).

A signal peptide spans 1–25 (MGSRAELCTLLGGFSFLLLLIPGEG). The region spanning 34-112 (SQGVCSKQTL…RHPGALTCEA (79 aa)) is the EMI domain. Disulfide bonds link C38–C97, C65–C71, C96–C110, C114–C124, C118–C130, C132–C141, C148–C159, C155–C168, and C170–C183. N50 carries an N-linked (GlcNAc...) asparagine glycan. In terms of domain architecture, EGF-like 1 spans 111–142 (EAICAKPCLNGGVCVRPDQCECAPGWGGKHCH). The region spanning 144–184 (DVDECRTSITLCSHHCFNTAGSFTCGCPHDLVLGVDGRTCM) is the EGF-like 2; calcium-binding domain. Residues 195-232 (SILSVAVREAEKDERALKQEIHELRGRLERLEQWAGQA) adopt a coiled-coil conformation.

It localises to the secreted. This is Epidermal growth factor-like protein 8 (EGFL8) from Homo sapiens (Human).